The primary structure comprises 127 residues: Fluoride-specific ion channel FluC (127 aa).

The next 4 membrane-spanning stretches (helical) occupy residues 4–24, 35–55, 71–91, and 103–123; these read LLLA…LLSM, LGTL…FAWF, TGFC…VFLL, and VFVN…LFSA. 2 residues coordinate Na(+): glycine 75 and threonine 78.

It belongs to the fluoride channel Fluc/FEX (TC 1.A.43) family.

The protein resides in the cell inner membrane. It carries out the reaction fluoride(in) = fluoride(out). Na(+) is not transported, but it plays an essential structural role and its presence is essential for fluoride channel function. In terms of biological role, fluoride-specific ion channel. Important for reducing fluoride concentration in the cell, thus reducing its toxicity. In Escherichia coli (strain ATCC 8739 / DSM 1576 / NBRC 3972 / NCIMB 8545 / WDCM 00012 / Crooks), this protein is Fluoride-specific ion channel FluC.